The primary structure comprises 204 residues: Translation initiation factor IF-3 (204 aa).

A disordered region spans residues 169-204 (VPKAAPKRDSGRSESAQEAPTARSAEASRPEAPANA).

This sequence belongs to the IF-3 family. As to quaternary structure, monomer.

Its subcellular location is the cytoplasm. In terms of biological role, IF-3 binds to the 30S ribosomal subunit and shifts the equilibrium between 70S ribosomes and their 50S and 30S subunits in favor of the free subunits, thus enhancing the availability of 30S subunits on which protein synthesis initiation begins. This is Translation initiation factor IF-3 from Deinococcus geothermalis (strain DSM 11300 / CIP 105573 / AG-3a).